The following is a 400-amino-acid chain: Subtilisin-like protease 11 (400 aa).

The first 19 residues, 1–19 (MGLFKVIFTAVAALSAVDA), serve as a signal peptide directing secretion. The propeptide occupies 20-117 (AELLSSAKSK…VEHDRHVYIS (98 aa)). In terms of domain architecture, Inhibitor I9 spans 35–116 (SYLVVMKDSV…FVEHDRHVYI (82 aa)). Positions 127–400 (SWGLGRVSHR…NKLLYNGSGK (274 aa)) constitute a Peptidase S8 domain. N-linked (GlcNAc...) asparagine glycosylation occurs at N138. D159 serves as the catalytic Charge relay system. The N-linked (GlcNAc...) asparagine glycan is linked to N181. H191 acts as the Charge relay system in catalysis. N-linked (GlcNAc...) asparagine glycans are attached at residues N252 and N337. S346 serves as the catalytic Charge relay system. N388 and N396 each carry an N-linked (GlcNAc...) asparagine glycan.

The protein belongs to the peptidase S8 family.

It localises to the secreted. Secreted subtilisin-like serine protease with keratinolytic activity that contributes to pathogenicity. The protein is Subtilisin-like protease 11 (SUB11) of Arthroderma benhamiae (strain ATCC MYA-4681 / CBS 112371) (Trichophyton mentagrophytes).